The sequence spans 272 residues: Plastid division protein PDV1 (272 aa).

The Cytoplasmic portion of the chain corresponds to 1 to 206 (MGEMEIEEIE…KRALGFNHVK (206 aa)). The interval 40–61 (KPSNRSEKRKNPHGNSGEDKRP) is disordered. Residues 78–102 (IQEAKSLNAIRTALENLEDQLEFFH) are a coiled coil. The helical transmembrane segment at 207–225 (GVLGNAAIFAISVVAMLHL) threads the bilayer. Residues 226-272 (HQVATSEHHLQKKEDRFYRSQQRKTYGRDKSSADRSLDHLDVMMARG) are Chloroplast intermembrane-facing.

As to quaternary structure, interacts (via C-terminus) with CDP1/PARC6 (via C-terminus). Interacts with ARC5/DRP5B. As to expression, expressed in young developing leaves, root tips, shoot apices, and flower buds (sepals, petals, stamens, and pistils), but not in developed tissues.

It is found in the plastid. The protein resides in the chloroplast outer membrane. Functionally, component of the plastid division machinery. Required to mediate the dissociation of ARC5/DRP5B from plastid outer envelope membranes (OEMs) at the midplastid constriction site in the cytoplasm, thus triggering ARC5/DRP5B ring turnover at the chloroplast division site. Binding to phosphatidylinositol 4-phosphate (PI4P) modulates negatively chloroplast division. This Arabidopsis thaliana (Mouse-ear cress) protein is Plastid division protein PDV1.